A 299-amino-acid chain; its full sequence is ATP phosphoribosyltransferase (299 aa).

It belongs to the ATP phosphoribosyltransferase family. Long subfamily. In terms of assembly, equilibrium between an active dimeric form, an inactive hexameric form and higher aggregates. Interconversion between the various forms is largely reversible and is influenced by the natural substrates and inhibitors of the enzyme. It depends on Mg(2+) as a cofactor.

Its subcellular location is the cytoplasm. It carries out the reaction 1-(5-phospho-beta-D-ribosyl)-ATP + diphosphate = 5-phospho-alpha-D-ribose 1-diphosphate + ATP. Its pathway is amino-acid biosynthesis; L-histidine biosynthesis; L-histidine from 5-phospho-alpha-D-ribose 1-diphosphate: step 1/9. Its activity is regulated as follows. Feedback inhibited by histidine. Its function is as follows. Catalyzes the condensation of ATP and 5-phosphoribose 1-diphosphate to form N'-(5'-phosphoribosyl)-ATP (PR-ATP). Has a crucial role in the pathway because the rate of histidine biosynthesis seems to be controlled primarily by regulation of HisG enzymatic activity. This Escherichia fergusonii (strain ATCC 35469 / DSM 13698 / CCUG 18766 / IAM 14443 / JCM 21226 / LMG 7866 / NBRC 102419 / NCTC 12128 / CDC 0568-73) protein is ATP phosphoribosyltransferase.